The following is a 400-amino-acid chain: WD repeat and FYVE domain-containing protein 2 (400 aa).

WD repeat units lie at residues 22 to 61 (GSQEVVNMAVIVPKEEGVISVSEDRTVRVWLKRDSGQYWP), 66 to 105 (AMPSPCSCMSFNPETRRLSIGLDNGTISEFILSEDYNKMT), 112 to 150 (AHQSRVTMILFVLELEWVLSTGQDKQFAWHCSESGQRLG), 153 to 192 (RTSAVASGLQFDVETRHVFIGDHSGQVTILKLEQENCTLV), 197 to 236 (GHTGGVTALCWDPVQRVLFSGSSDHSVIMWDIGGRKGTAI), and 240 to 279 (GHNDRVQALSYAQHTRQLISCGGDGGIVVWNMDVERQETP). The FYVE-type zinc finger occupies 281–352 (WLDSDSCQKC…VCDSCHEAIT (72 aa)). Residues Cys287, Cys290, Cys314, Cys317, Cys322, Cys325, Cys344, and Cys347 each contribute to the Zn(2+) site. A WD 7 repeat occupies 364 to 399 (DSKHNIVHVHFDATRGWLLTSGTDKVIKLWDMTPVV).

In terms of assembly, homodimer. Interacts (via WD repeats 1-3) with AKT1, AKT2, PRKCZ and PRKCI. Interacts with VAMP2. Forms a complex with VAMP2 and PRKCZ. Interacts with FOXO1. Forms a complex with AKT1 and FOXO1.

It localises to the endosome. Its subcellular location is the early endosome. The protein localises to the cytoplasm. Its function is as follows. Acts in an adapter protein-like fashion to mediate the interaction between the kinase PRKCZ and its substrate VAMP2 and increases the PRKCZ-dependent phosphorylation of VAMP2. Positively regulates adipocyte differentiation, by facilitating the phosphorylation and thus inactivation of the anti-adipogenetic transcription factor FOXO1 by the kinase AKT1. Plays a role in endosomal control of AKT2 signaling; required for insulin-stimulated AKT2 phosphorylation and glucose uptake and insulin-stimulated phosphorylation of AKT2 substrates. Participates in transferrin receptor endocytosis. The protein is WD repeat and FYVE domain-containing protein 2 (WDFY2) of Homo sapiens (Human).